Reading from the N-terminus, the 1802-residue chain is Bromodomain and WD repeat-containing protein 3 (1802 aa).

WD repeat units follow at residues 170 to 209 (IKMH…IWAT), 213 to 251 (RLLA…VWCL), 255 to 297 (APVA…FWQW), 307 to 347 (RPVK…IYYL), 353 to 393 (EKIA…IWQY), 400 to 452 (SIVL…VWNS), 456 to 495 (QLLH…IWDL), and 502 to 542 (RNYF…LFGF). A phosphoserine mark is found at serine 693 and serine 703. Residues 768–910 (KPSYTTQRND…PKQTRKKKGG (143 aa)) are disordered. The segment covering 785 to 795 (SLRRTQRKRQH) has biased composition (basic residues). Over residues 796 to 817 (TYQTRSNIEHNSQASCQNSGVQ) the composition is skewed to polar residues. Residues 818–829 (EDSDSSSEEDET) are compositionally biased toward acidic residues. A compositionally biased stretch (low complexity) spans 846–859 (SESSSSDSSSEYSD). Residues serine 885 and serine 886 each carry the phosphoserine modification. Residues 889–898 (ENLKSLEERQ) are compositionally biased toward basic and acidic residues. A compositionally biased stretch (basic residues) spans 899-909 (KKPKQTRKKKG). The region spanning 1138–1245 (WGAHSRDEEC…DVLLRFIGDQ (108 aa)) is the Bromo 1 domain. Disordered stretches follow at residues 1262-1292 (RNST…VKCR), 1326-1361 (RQPA…LSED), 1438-1500 (IQSQ…SPVS), and 1520-1725 (SSSS…RAKR). Positions 1266-1278 (DAEEDTEIVDLDS) are enriched in acidic residues. The region spanning 1300–1430 (CNPDAWKKQC…ALFESHIKNI (131 aa)) is the Bromo 2 domain. A compositionally biased stretch (basic residues) spans 1441-1453 (QKRRRPRYRKRLR). A compositionally biased stretch (low complexity) spans 1454–1468 (SSSSSLSSSGAPSPK). The segment covering 1479–1499 (KNDQNTSVSHARTSSPFSSPV) has biased composition (polar residues). Residues 1520–1533 (SSSSFGGYSRSGNS) are compositionally biased toward low complexity. A phosphoserine mark is found at serine 1577 and serine 1579. Over residues 1587 to 1600 (GEDKEKKETKEKSH) the composition is skewed to basic and acidic residues. The span at 1601 to 1626 (LSTSESGELGSSLSSESTCGSDSDSE) shows a compositional bias: low complexity. Residues 1627-1643 (STSRTDQDYVDGDHDYS) show a composition bias toward basic and acidic residues. 2 stretches are compositionally biased toward basic residues: residues 1649 to 1666 (RPKR…RNWK) and 1684 to 1697 (RGGR…RGSR). Serine 1763 bears the Phosphoserine mark.

Found in most adult tissues. Down-regulated in a majority of the B-CLL cases examined.

Functionally, plays a role in the regulation of cell morphology and cytoskeletal organization. Required in the control of cell shape. In Homo sapiens (Human), this protein is Bromodomain and WD repeat-containing protein 3 (BRWD3).